A 134-amino-acid chain; its full sequence is Putative pre-16S rRNA nuclease (134 aa).

The protein belongs to the YqgF nuclease family.

The protein resides in the cytoplasm. Its function is as follows. Could be a nuclease involved in processing of the 5'-end of pre-16S rRNA. The sequence is that of Putative pre-16S rRNA nuclease from Helicobacter pylori (strain G27).